Here is a 146-residue protein sequence, read N- to C-terminus: Large-conductance mechanosensitive channel (146 aa).

Helical transmembrane passes span 21–41 (VGII…ADLI), 44–64 (VIGL…LGDG), and 83–103 (GAFI…FLLV).

It belongs to the MscL family. Homopentamer.

The protein localises to the cell inner membrane. Channel that opens in response to stretch forces in the membrane lipid bilayer. May participate in the regulation of osmotic pressure changes within the cell. The chain is Large-conductance mechanosensitive channel from Cereibacter sphaeroides (strain ATCC 17025 / ATH 2.4.3) (Rhodobacter sphaeroides).